A 407-amino-acid polypeptide reads, in one-letter code: Na(+)-translocating NADH-quinone reductase subunit F (407 aa).

Residues 3 to 23 (ITLGIAMFTVIVLALAVIILF) form a helical membrane-spanning segment. Residues 32–126 (GDITIEINDD…SMKVELPEEV (95 aa)) enclose the 2Fe-2S ferredoxin-type domain. [2Fe-2S] cluster-binding residues include Cys-69, Cys-75, Cys-78, and Cys-110. The region spanning 129–269 (VKKWECTVIS…SGPFGEFFAK (141 aa)) is the FAD-binding FR-type domain. The tract at residues 272 to 389 (DAEMVFVGGG…PIMNASVIKM (118 aa)) is catalytic.

The protein belongs to the NqrF family. Composed of six subunits; NqrA, NqrB, NqrC, NqrD, NqrE and NqrF. [2Fe-2S] cluster is required as a cofactor. It depends on FAD as a cofactor.

The protein resides in the cell inner membrane. The enzyme catalyses a ubiquinone + n Na(+)(in) + NADH + H(+) = a ubiquinol + n Na(+)(out) + NAD(+). In terms of biological role, NQR complex catalyzes the reduction of ubiquinone-1 to ubiquinol by two successive reactions, coupled with the transport of Na(+) ions from the cytoplasm to the periplasm. The first step is catalyzed by NqrF, which accepts electrons from NADH and reduces ubiquinone-1 to ubisemiquinone by a one-electron transfer pathway. The polypeptide is Na(+)-translocating NADH-quinone reductase subunit F (Pasteurella multocida (strain Pm70)).